We begin with the raw amino-acid sequence, 86 residues long: Chymotrypsin inhibitor (86 aa).

The N-terminal stretch at 1-22 (MKLLFAIVALLALAFLCADISA) is a signal peptide.

It belongs to the protease inhibitor I13 (potato type I serine protease inhibitor) family. In terms of assembly, monomer. As to expression, expressed in the body wall, coelomocytes and at a lower level in intestine.

Its subcellular location is the secreted. In terms of biological role, inhibits L.terrestris digestive chymotrypsin LT_CH 1 and bovine alpha-chymotrypsin. The polypeptide is Chymotrypsin inhibitor (Lumbricus terrestris (Common earthworm)).